We begin with the raw amino-acid sequence, 357 residues long: Acyl-coenzyme A diphosphatase NUDT19 (357 aa).

In terms of domain architecture, Nudix hydrolase spans 10–242 (AATVMLAAGW…IWLAPPQFYE (233 aa)). The tract at residues 72–94 (PRFGLGPEPPRQPPFPGLSHGDA) is disordered. Positions 78 to 87 (PEPPRQPPFP) are enriched in pro residues. The short motif at 97–118 (AALPDDVALRICAIRETFEEAG) is the Nudix box element. Residues Glu-112 and Glu-116 each coordinate Mg(2+). At Lys-300 the chain carries N6-succinyllysine. The Microbody targeting signal signature appears at 355-357 (AHL).

It belongs to the Nudix hydrolase family. In terms of assembly, monomer. Requires Mg(2+) as cofactor. Mn(2+) is required as a cofactor.

Its subcellular location is the peroxisome. It catalyses the reaction an acyl-CoA + H2O = an acyl-4'-phosphopantetheine + adenosine 3',5'-bisphosphate + 2 H(+). It carries out the reaction CoA + H2O = (R)-4'-phosphopantetheine + adenosine 3',5'-bisphosphate + 2 H(+). The catalysed reaction is hexanoyl-CoA + H2O = hexanoyl-4'-phosphopantetheine + adenosine 3',5'-bisphosphate + 2 H(+). The enzyme catalyses octanoyl-CoA + H2O = S-octanoyl-4'-phosphopantetheine + adenosine 3',5'-bisphosphate + 2 H(+). It catalyses the reaction butanoyl-CoA + H2O = S-butanoyl-4'-phosphopantetheine + adenosine 3',5'-bisphosphate + 2 H(+). It carries out the reaction propanoyl-CoA + H2O = propanoyl-4'-phosphopantetheine + adenosine 3',5'-bisphosphate + 2 H(+). The catalysed reaction is malonyl-CoA + H2O = malonyl-4'-phosphopantetheine + adenosine 3',5'-bisphosphate + 2 H(+). The enzyme catalyses succinyl-CoA + H2O = succinyl-4'-phosphopantetheine + adenosine 3',5'-bisphosphate + 2 H(+). It catalyses the reaction choloyl-CoA + H2O = S-choloyl-4'-phosphopantetheine + adenosine 3',5'-bisphosphate + 2 H(+). It carries out the reaction 4,8-dimethylnonanoyl-CoA + H2O = S-(4,8-dimethylnonanoyl)-4'-phosphopantetheine + adenosine 3',5'-bisphosphate + 2 H(+). The catalysed reaction is (9Z,12Z,15Z)-octadecatrienoyl-CoA + H2O = S-(9Z,12Z,15Z-octadecatrienoyl)-4'-phosphopantetheine + adenosine 3',5'-bisphosphate + 2 H(+). The enzyme catalyses (9Z,12Z)-octadecadienoyl-CoA + H2O = S-(9Z,12Z-octadecadienoyl)-4'-phosphopantetheine + adenosine 3',5'-bisphosphate + 2 H(+). It catalyses the reaction (9Z)-hexadecenoyl-CoA + H2O = S-(9Z-hexadecenoyl)-4'-phosphopantetheine + adenosine 3',5'-bisphosphate + 2 H(+). It carries out the reaction (9Z)-tetradecenoyl-CoA + H2O = S-(9Z-tetradecenoyl)-4'-phosphopantetheine + adenosine 3',5'-bisphosphate + 2 H(+). The catalysed reaction is (6Z)-octenoyl-CoA + H2O = S-(6Z-octenoyl)-4'-phosphopantetheine + adenosine 3',5'-bisphosphate + 2 H(+). The enzyme catalyses hexadecanoyl-CoA + H2O = S-hexadecanoyl-4'-phosphopantetheine + adenosine 3',5'-bisphosphate + 2 H(+). It catalyses the reaction tetradecanoyl-CoA + H2O = tetradecanoyl-4'-phosphopantetheine + adenosine 3',5'-bisphosphate + 2 H(+). It carries out the reaction dodecanoyl-CoA + H2O = S-dodecanoyl-4'-phosphopantetheine + adenosine 3',5'-bisphosphate + 2 H(+). The catalysed reaction is a 5'-end CoA-ribonucleoside in mRNA + H2O = a 5'-end phospho-adenosine-phospho-ribonucleoside in mRNA + (R)-4'-phosphopantetheine + 2 H(+). Its function is as follows. Fatty acyl-coenzyme A (CoA) diphosphatase that hydrolyzes fatty acyl-CoA to yield acyl-4'-phosphopantetheine and adenosine 3',5'-bisphosphate. Mediates the hydrolysis of a wide range of CoA esters, including choloyl-CoA and branched-chain fatty-acyl-CoA esters and at low substrate concentrations medium and long-chain fatty-acyl-CoA esters are the primary substrates. Highest activity seen with medium-chain acyl-CoA esters and higher rates of activity seen with the unsaturated acyl-CoA esters compared with the saturated esters. Exhibits decapping activity towards dpCoA-capped RNAs in vitro. The protein is Acyl-coenzyme A diphosphatase NUDT19 (Nudt19) of Mus caroli (Ryukyu mouse).